A 132-amino-acid chain; its full sequence is Small ribosomal subunit protein uS11 (132 aa).

It belongs to the universal ribosomal protein uS11 family. Part of the 30S ribosomal subunit. Interacts with proteins S7 and S18. Binds to IF-3.

Functionally, located on the platform of the 30S subunit, it bridges several disparate RNA helices of the 16S rRNA. Forms part of the Shine-Dalgarno cleft in the 70S ribosome. In Alkaliphilus metalliredigens (strain QYMF), this protein is Small ribosomal subunit protein uS11.